The sequence spans 139 residues: D-ribose pyranase (139 aa).

His-20 acts as the Proton donor in catalysis. Residues Asp-28, His-106, and 128–130 (YAN) each bind substrate.

The protein belongs to the RbsD / FucU family. RbsD subfamily. As to quaternary structure, homodecamer.

It localises to the cytoplasm. The catalysed reaction is beta-D-ribopyranose = beta-D-ribofuranose. It participates in carbohydrate metabolism; D-ribose degradation; D-ribose 5-phosphate from beta-D-ribopyranose: step 1/2. Its function is as follows. Catalyzes the interconversion of beta-pyran and beta-furan forms of D-ribose. This Aliivibrio salmonicida (strain LFI1238) (Vibrio salmonicida (strain LFI1238)) protein is D-ribose pyranase.